The following is a 160-amino-acid chain: Ureidoglycolate lyase (160 aa).

This sequence belongs to the ureidoglycolate lyase family. In terms of assembly, homodimer. Requires Ni(2+) as cofactor.

The enzyme catalyses (S)-ureidoglycolate = urea + glyoxylate. It functions in the pathway nitrogen metabolism; (S)-allantoin degradation. Functionally, catalyzes the catabolism of the allantoin degradation intermediate (S)-ureidoglycolate, generating urea and glyoxylate. Involved in the utilization of allantoin as nitrogen source. In Salmonella typhimurium (strain LT2 / SGSC1412 / ATCC 700720), this protein is Ureidoglycolate lyase.